The chain runs to 127 residues: Fluoride-specific ion channel FluC (127 aa).

4 helical membrane passes run 4–24, 35–55, 71–91, and 103–123; these read LLLAVFIGGGTGSVARWLLSM, LGTLTANLIGAFIIGIGFAWF, TGFCGGLTTFSTFSAEVVFLL, and VFVNLLGSFAMTALAFWLFSA. Na(+)-binding residues include glycine 75 and threonine 78.

The protein belongs to the fluoride channel Fluc/FEX (TC 1.A.43) family.

The protein resides in the cell inner membrane. It carries out the reaction fluoride(in) = fluoride(out). Na(+) is not transported, but it plays an essential structural role and its presence is essential for fluoride channel function. Functionally, fluoride-specific ion channel. Important for reducing fluoride concentration in the cell, thus reducing its toxicity. This chain is Fluoride-specific ion channel FluC, found in Escherichia coli (strain K12 / MC4100 / BW2952).